A 257-amino-acid chain; its full sequence is Flap endonuclease Xni (257 aa).

Asp112 provides a ligand contact to Mg(2+). In terms of domain architecture, 5'-3' exonuclease spans 169-256 (EQKKLVEFWA…LGFSLKQLRL (88 aa)). Residues Phe179, Ala180, Pro188, Val190, and Ile193 each contribute to the K(+) site. The segment at 192 to 197 (GIGTKS) is interaction with DNA.

Belongs to the Xni family. It depends on Mg(2+) as a cofactor. Requires K(+) as cofactor.

In terms of biological role, has flap endonuclease activity. During DNA replication, flap endonucleases cleave the 5'-overhanging flap structure that is generated by displacement synthesis when DNA polymerase encounters the 5'-end of a downstream Okazaki fragment. This chain is Flap endonuclease Xni, found in Pseudoalteromonas translucida (strain TAC 125).